Reading from the N-terminus, the 443-residue chain is Trigger factor (443 aa).

The 86-residue stretch at 165–250 (GDQIVMDFLG…VKEVKKPVPA (86 aa)) folds into the PPIase FKBP-type domain.

It belongs to the FKBP-type PPIase family. Tig subfamily.

It is found in the cytoplasm. It carries out the reaction [protein]-peptidylproline (omega=180) = [protein]-peptidylproline (omega=0). In terms of biological role, involved in protein export. Acts as a chaperone by maintaining the newly synthesized protein in an open conformation. Functions as a peptidyl-prolyl cis-trans isomerase. This Roseobacter denitrificans (strain ATCC 33942 / OCh 114) (Erythrobacter sp. (strain OCh 114)) protein is Trigger factor.